We begin with the raw amino-acid sequence, 274 residues long: MTTYAIGDLQGCQTQLNDLLQKIDAVAPQAQLVFVGDIVNRGPRSLATLRQVRALGQRARIVLGNHDLNLLAIACGLRKPHASDTVDDIMAADDRDELIDWLRHQPLALARDNHLFVHAGVLPQWSAAQTVALSREVEAVLQGPDWVAFLQKMYGNEPSLWDDSLQGDDRLRCIVNALTRIRFCQADGRMDFKAVESLAHTPAGLMPWFDAPDRRSTDTTVVFGHWSTLGLMVLPNVIGLDTGCVWGGQLTAMNLTDRTTIQVKCPQHQKPGKN.

The protein belongs to the Ap4A hydrolase family.

The catalysed reaction is P(1),P(4)-bis(5'-adenosyl) tetraphosphate + H2O = 2 ADP + 2 H(+). Its function is as follows. Hydrolyzes diadenosine 5',5'''-P1,P4-tetraphosphate to yield ADP. This is Bis(5'-nucleosyl)-tetraphosphatase, symmetrical from Janthinobacterium sp. (strain Marseille) (Minibacterium massiliensis).